Consider the following 146-residue polypeptide: Bradykinin-like neuropeptide (146 aa).

Residues 1–24 (MTSSIYGFITLSVVALISQTTCRS) form the signal peptide. 2 propeptides span residues 25–80 (LDLL…LMEA) and 92–146 (LRSY…FRYG).

Neuron L5.

It is found in the secreted. Its function is as follows. May have important functions in renal physiology and in animal behavior, as does bradykinin. The polypeptide is Bradykinin-like neuropeptide (LUQ-1) (Aplysia californica (California sea hare)).